The chain runs to 151 residues: Transcriptional regulator MraZ (151 aa).

SpoVT-AbrB domains are found at residues 5–52 (ANAI…PLSE) and 81–124 (AVDL…DEDA).

It belongs to the MraZ family. As to quaternary structure, forms oligomers.

The protein resides in the cytoplasm. It is found in the nucleoid. The chain is Transcriptional regulator MraZ from Pseudomonas syringae pv. tomato (strain ATCC BAA-871 / DC3000).